The sequence spans 24 residues: Bombinin (24 aa).

Asparagine amide is present on asparagine 24.

It belongs to the bombinin family. As to expression, expressed by the skin glands.

The protein localises to the secreted. Has antimicrobial and hemolytic activities. This Bombina variegata (Yellow-bellied toad) protein is Bombinin.